The chain runs to 1433 residues: DNA-directed RNA polymerase subunit beta' (1433 aa).

Positions 66, 68, 81, and 84 each coordinate Zn(2+). The interval 328-347 is disordered; sequence RKSSAVKTDSNRPLKSLSDS. Positions 329–346 are enriched in polar residues; sequence KSSAVKTDSNRPLKSLSD. Asp-477, Asp-479, and Asp-481 together coordinate Mg(2+). Zn(2+) is bound by residues Cys-825, Cys-899, Cys-906, and Cys-909.

This sequence belongs to the RNA polymerase beta' chain family. In terms of assembly, the RNAP catalytic core consists of 2 alpha, 1 beta, 1 beta' and 1 omega subunit. When a sigma factor is associated with the core the holoenzyme is formed, which can initiate transcription. Mg(2+) serves as cofactor. Requires Zn(2+) as cofactor.

It carries out the reaction RNA(n) + a ribonucleoside 5'-triphosphate = RNA(n+1) + diphosphate. DNA-dependent RNA polymerase catalyzes the transcription of DNA into RNA using the four ribonucleoside triphosphates as substrates. The sequence is that of DNA-directed RNA polymerase subunit beta' from Christiangramia forsetii (strain DSM 17595 / CGMCC 1.15422 / KT0803) (Gramella forsetii).